The sequence spans 244 residues: Tabinhibitin 8 (244 aa).

The N-terminal stretch at 1 to 23 (MTSILVSRFKISALTLQYATSDS) is a signal peptide. The SCP domain maps to 67–194 (YTGGGIIVLR…KTPLFFSSNC (128 aa)). The Cell attachment site signature appears at 143–145 (RGD).

The protein belongs to the CRISP family. Expressed in salivary glands.

The protein resides in the secreted. In terms of biological role, inhibits platelet aggregation induced by all agonists tested (ADP, arachidonic acid, the thromboxane A2 analog U46619, thrombin, and snake venom snaclecs (TMVA that activates platelet through GPIB, and stejnulxin that specifically acts through GPVI (GP6))). May act by competing with fibrinogen for binding to glycoprotein IIb/IIIa (ITGA2B/ITGB3). The chain is Tabinhibitin 8 from Tabanus yao (Horsefly).